A 159-amino-acid polypeptide reads, in one-letter code: Dihydrofolate reductase (159 aa).

A DHFR domain is found at 1–158 (MISLIAALAV…HSYCFEILER (158 aa)). Position 5 (I5) interacts with substrate. NADP(+) is bound by residues A7 and 13 to 19 (VIGMENA). D27 contacts substrate. 45–46 (HT) contributes to the NADP(+) binding site. Positions 52 and 57 each coordinate substrate. Residues 63-64 (SS), K76, and 95-102 (GGGRVYEQ) contribute to the NADP(+) site. T113 is a substrate binding site.

It belongs to the dihydrofolate reductase family.

The catalysed reaction is (6S)-5,6,7,8-tetrahydrofolate + NADP(+) = 7,8-dihydrofolate + NADPH + H(+). Its pathway is cofactor biosynthesis; tetrahydrofolate biosynthesis; 5,6,7,8-tetrahydrofolate from 7,8-dihydrofolate: step 1/1. Functionally, key enzyme in folate metabolism. Catalyzes an essential reaction for de novo glycine and purine synthesis, and for DNA precursor synthesis. The chain is Dihydrofolate reductase (folA) from Escherichia coli O6:H1 (strain CFT073 / ATCC 700928 / UPEC).